The sequence spans 240 residues: LexA repressor (240 aa).

Residues 26–46 (FDEMKDALDLASKSGIHRLIT) constitute a DNA-binding region (H-T-H motif). Active-site for autocatalytic cleavage activity residues include Ser-160 and Lys-198.

Belongs to the peptidase S24 family. Homodimer.

It catalyses the reaction Hydrolysis of Ala-|-Gly bond in repressor LexA.. Functionally, represses a number of genes involved in the response to DNA damage (SOS response), including recA and lexA. In the presence of single-stranded DNA, RecA interacts with LexA causing an autocatalytic cleavage which disrupts the DNA-binding part of LexA, leading to derepression of the SOS regulon and eventually DNA repair. The polypeptide is LexA repressor (Agrobacterium fabrum (strain C58 / ATCC 33970) (Agrobacterium tumefaciens (strain C58))).